The chain runs to 488 residues: Cysteine desulfurase, mitochondrial (488 aa).

The tract at residues 25-52 (LPKPLATSSSPATNAPNKTSNPKTGELH) is disordered. Polar residues predominate over residues 30-47 (ATSSSPATNAPNKTSNPK). Pyridoxal 5'-phosphate contacts are provided by residues 157–158 (AT), asparagine 237, glutamine 265, and 285–287 (SSH). Lysine 288 carries the N6-(pyridoxal phosphate)lysine modification. Threonine 325 lines the pyridoxal 5'-phosphate pocket. The active-site Cysteine persulfide intermediate is the cysteine 412. Position 412 (cysteine 412) interacts with [2Fe-2S] cluster.

It belongs to the class-V pyridoxal-phosphate-dependent aminotransferase family. NifS/IscS subfamily. Requires pyridoxal 5'-phosphate as cofactor.

Its subcellular location is the mitochondrion. The enzyme catalyses (sulfur carrier)-H + L-cysteine = (sulfur carrier)-SH + L-alanine. Its function is as follows. Catalyzes the removal of elemental sulfur from cysteine to produce alanine. It supplies the inorganic sulfur for iron-sulfur (Fe-S) clusters. Plays a role in both tRNA-processing and mitochondrial metabolism. Involved in the 2-thio-modification of both 5-carboxymethylaminomethyl-2-thiouridine in mitochondrial tRNAs and 5-methoxycarbonylmethyl-2-thiouridine (mcm5s2U) in cytoplasmic tRNAs. This is Cysteine desulfurase, mitochondrial (NFS1) from Candida albicans (strain SC5314 / ATCC MYA-2876) (Yeast).